Here is a 434-residue protein sequence, read N- to C-terminus: Serine hydroxymethyltransferase (434 aa).

(6S)-5,6,7,8-tetrahydrofolate is bound by residues Leu-124 and 128 to 130; that span reads GHL. At Lys-233 the chain carries N6-(pyridoxal phosphate)lysine. Glu-249 contributes to the (6S)-5,6,7,8-tetrahydrofolate binding site.

This sequence belongs to the SHMT family. As to quaternary structure, homodimer. Pyridoxal 5'-phosphate serves as cofactor.

Its subcellular location is the cytoplasm. The catalysed reaction is (6R)-5,10-methylene-5,6,7,8-tetrahydrofolate + glycine + H2O = (6S)-5,6,7,8-tetrahydrofolate + L-serine. It participates in one-carbon metabolism; tetrahydrofolate interconversion. The protein operates within amino-acid biosynthesis; glycine biosynthesis; glycine from L-serine: step 1/1. Its function is as follows. Catalyzes the reversible interconversion of serine and glycine with tetrahydrofolate (THF) serving as the one-carbon carrier. This reaction serves as the major source of one-carbon groups required for the biosynthesis of purines, thymidylate, methionine, and other important biomolecules. Also exhibits THF-independent aldolase activity toward beta-hydroxyamino acids, producing glycine and aldehydes, via a retro-aldol mechanism. The chain is Serine hydroxymethyltransferase from Synechococcus sp. (strain JA-3-3Ab) (Cyanobacteria bacterium Yellowstone A-Prime).